The sequence spans 37 residues: Large ribosomal subunit protein bL36c (37 aa).

It belongs to the bacterial ribosomal protein bL36 family.

Its subcellular location is the plastid. The protein localises to the chloroplast. This Coffea arabica (Arabian coffee) protein is Large ribosomal subunit protein bL36c.